Consider the following 352-residue polypeptide: MLTERQLMILKEIIRLFTESGQPVGSKKLMSELPMHVSSATIRNDMADLENVGLIEKTHSSSGRVPSMKGYRYYLDHLIQPAVLNPMDVATVQQSFGRHYHKIDEIVSQSANILSNLTSYTAITLGPEMAAIRLTGFRLVPLGNHQVMAIIVTSAGTVDNQVFTIPNAISGDELEKAIRVVNDHLIGLPLTVVSQKLKIEVPALLMQYMGSPGGFLNIFDDVLKQASQERLYVGGQSNLLNFSELTDVSQLKSIYNIINQSDDLAKLLELSPGEANSQVQVRLGNEMTNDLLKNYSLMTVNYDVGEHGQGLIALLGPTSMPYSRMIGLLDLFREELAKKLIDYYADFDDSQS.

The protein belongs to the HrcA family.

Its function is as follows. Negative regulator of class I heat shock genes (grpE-dnaK-dnaJ and groELS operons). Prevents heat-shock induction of these operons. In Latilactobacillus sakei subsp. sakei (strain 23K) (Lactobacillus sakei subsp. sakei), this protein is Heat-inducible transcription repressor HrcA.